Consider the following 692-residue polypeptide: UvrABC system protein B (692 aa).

A Helicase ATP-binding domain is found at 32–187 (ENIENGEKAQ…LLNDLVGIQF (156 aa)). Residue 45–52 (GATGTGKT) participates in ATP binding. Positions 98–121 (YYDYYQPEAYVPSSDTYIEKDSSV) match the Beta-hairpin motif. The Helicase C-terminal domain occupies 436 to 631 (QIDDLVGEIH…TIKKEIRDLI (196 aa)). Positions 656–691 (KALVKKLEKEMQQAAAALDFEGAAQLRDMVLELRAM) constitute a UVR domain.

Belongs to the UvrB family. As to quaternary structure, forms a heterotetramer with UvrA during the search for lesions. Interacts with UvrC in an incision complex.

It is found in the cytoplasm. In terms of biological role, the UvrABC repair system catalyzes the recognition and processing of DNA lesions. A damage recognition complex composed of 2 UvrA and 2 UvrB subunits scans DNA for abnormalities. Upon binding of the UvrA(2)B(2) complex to a putative damaged site, the DNA wraps around one UvrB monomer. DNA wrap is dependent on ATP binding by UvrB and probably causes local melting of the DNA helix, facilitating insertion of UvrB beta-hairpin between the DNA strands. Then UvrB probes one DNA strand for the presence of a lesion. If a lesion is found the UvrA subunits dissociate and the UvrB-DNA preincision complex is formed. This complex is subsequently bound by UvrC and the second UvrB is released. If no lesion is found, the DNA wraps around the other UvrB subunit that will check the other stand for damage. The chain is UvrABC system protein B from Lactococcus lactis subsp. cremoris (strain SK11).